The chain runs to 25 residues: Xenoposin precursor fragment BM2 (25 aa).

In terms of tissue distribution, expressed by the skin glands.

The protein localises to the secreted. In terms of biological role, antimicrobial peptide. This is Xenoposin precursor fragment BM2 from Xenopus boumbaensis (Mawa clawed frog).